Reading from the N-terminus, the 86-residue chain is Haditoxin (86 aa).

The signal sequence occupies residues 1 to 21 (MKTLLLTLVVVTIVYLDLGYT). 4 disulfide bridges follow: cysteine 24–cysteine 45, cysteine 38–cysteine 62, cysteine 66–cysteine 78, and cysteine 79–cysteine 84.

The protein belongs to the three-finger toxin family. Short-chain subfamily. Orphan group VIII (haditoxin) sub-subfamily. In terms of assembly, homodimer; non-covalently linked. In terms of tissue distribution, expressed by the venom gland.

The protein localises to the secreted. Its function is as follows. Antagonist of muscle (alpha-1-beta-1-delta-epsilon/CHRNA1-CHRNB1-CHRND-CHRNE) and neuronal (alpha-7/CHRNA7, alpha-3-beta-2/CHRNA3-CHRNB2, alpha-4-beta-2/CHRNA4-CHRNB2) nicotinic acetylcholine receptors (nAChR). The highest affinity is for human alpha-7/CHRNA7 nAChRs (IC(50)=180 nM), compared to human alpha-1-beta-1-delta-epsilon/CHRNA1-CHRNB1-CHRND-CHRNE nAChR (IC(50)= 550 nM), alpha-3-beta-2/CHRNA3-CHRNB2 nAChR (IC(50)=500 nM), and alpha-4-beta-2/CHRNA4-CHRNB2 nAChR (IC(50)=2.6 uM). The chain is Haditoxin from Ophiophagus hannah (King cobra).